The chain runs to 227 residues: ATP phosphoribosyltransferase (227 aa).

This sequence belongs to the ATP phosphoribosyltransferase family. Short subfamily. Heteromultimer composed of HisG and HisZ subunits.

It localises to the cytoplasm. The catalysed reaction is 1-(5-phospho-beta-D-ribosyl)-ATP + diphosphate = 5-phospho-alpha-D-ribose 1-diphosphate + ATP. It participates in amino-acid biosynthesis; L-histidine biosynthesis; L-histidine from 5-phospho-alpha-D-ribose 1-diphosphate: step 1/9. Its function is as follows. Catalyzes the condensation of ATP and 5-phosphoribose 1-diphosphate to form N'-(5'-phosphoribosyl)-ATP (PR-ATP). Has a crucial role in the pathway because the rate of histidine biosynthesis seems to be controlled primarily by regulation of HisG enzymatic activity. The polypeptide is ATP phosphoribosyltransferase (Rhodospirillum rubrum (strain ATCC 11170 / ATH 1.1.1 / DSM 467 / LMG 4362 / NCIMB 8255 / S1)).